A 115-amino-acid chain; its full sequence is Double-headed protease inhibitor, submandibular gland (115 aa).

Kazal-like domains lie at 6-66 and 67-115; these read IGRE…ACDI and ECTE…HGEC. 6 disulfide bridges follow: cysteine 12–cysteine 46, cysteine 24–cysteine 43, cysteine 32–cysteine 64, cysteine 68–cysteine 97, cysteine 75–cysteine 94, and cysteine 83–cysteine 115.

The protein resides in the secreted. Its function is as follows. This inhibitor is composed of two homologous actively inhibiting halves: one which inhibits trypsin, the other which inhibits elastase. This Canis lupus familiaris (Dog) protein is Double-headed protease inhibitor, submandibular gland.